A 576-amino-acid polypeptide reads, in one-letter code: S-layer protein (576 aa).

The first 23 residues, 1 to 23 (KKIGAIAAGSAMVASALATGVFA), serve as a signal peptide directing secretion. Residues Asn102 and Asn132 are each glycosylated (N-linked (GlcNAc...) asparagine).

The protein belongs to the Mj S-layer protein family. N-linked glycans consist of the 779 Da trisaccharide beta-ManNAc(Thr)-(1-4)-beta-GlcNAc3NAcA-(1-3)-beta-GlcNAc.

It is found in the secreted. The protein localises to the cell wall. Its subcellular location is the S-layer. In terms of biological role, S-layer protein. The S-layer is a paracrystalline mono-layered assembly of proteins which coat the surface of the cell. The protein is S-layer protein (sla) of Methanococcus voltae.